Here is a 151-residue protein sequence, read N- to C-terminus: Large ribosomal subunit protein bL9 (151 aa).

This sequence belongs to the bacterial ribosomal protein bL9 family.

In terms of biological role, binds to the 23S rRNA. In Chlorobium phaeobacteroides (strain DSM 266 / SMG 266 / 2430), this protein is Large ribosomal subunit protein bL9.